Here is a 268-residue protein sequence, read N- to C-terminus: M1-specific T cell receptor alpha chain (268 aa).

The N-terminal stretch at 1–19 is a signal peptide; the sequence is MVLKFSVSILWIQLAWVST. The 88-residue stretch at 20–107 folds into the Ig-like V-type domain; sequence QLLEQSPQFL…QPGDTGLYLC (88 aa). The tract at residues 20–109 is t cell receptor alpha variable 27; sequence QLLEQSPQFL…GDTGLYLCAG (90 aa). 2 N-linked (GlcNAc...) asparagine glycosylation sites follow: Asn-36 and Asn-42. The cysteines at positions 41 and 107 are disulfide-linked. The segment at 45 to 49 is CDR1; sequence SVFSS. The CDR2 stretch occupies residues 67-69; that stretch reads VVT. The CDR3 stretch occupies residues 107-118; the sequence is CAGGGSQGNLIF. Residues 110 to 128 are t cell receptor alpha joining 42; sequence GGSQGNLIFGKGTKLSVKP. Residues 129–268 form a t cell receptor alpha constant region; it reads IQNPDPAVYQ…LLMTLRLWSS (140 aa). Residues 147–235 enclose the Ig-like C1-type domain; the sequence is KSVCLFTDFD…LVEKSFETDT (89 aa). Cys-150 and Cys-200 form a disulfide bridge. 4 N-linked (GlcNAc...) asparagine glycosylation sites follow: Asn-160, Asn-194, Asn-205, and Asn-241. The connecting peptide stretch occupies residues 222-243; sequence CDVKLVEKSFETDTNLNFQNLS. Residues 244–266 traverse the membrane as a helical segment; sequence VIGFRILLLKVAGFNLLMTLRLW. Residues 267-268 are Cytoplasmic-facing; the sequence is SS.

Disulfide-linked heterodimer with TRBV19*01J2S7*01C*02 beta chain. The TR primarily interacts via its CDR3-beta domain with M/matrix protein 1-derived peptide (GILGFVFTL) displayed by HLA-A*02.01 in a 'peg-notch' recognition mode. The alpha-beta TR associates with the transmembrane signaling CD3 coreceptor proteins to form the TR-CD3 (TCR). The assembly of alpha-beta TR heterodimers with CD3 occurs in the endoplasmic reticulum where a single alpha-beta TR heterodimer associates with one CD3D-CD3E heterodimer, one CD3G-CD3E heterodimer and one CD247 homodimer forming a stable octameric structure. CD3D-CD3E and CD3G-CD3E heterodimers preferentially associate with TR alpha and TR beta chains (via TM domain), respectively. The association of the CD247 homodimer is the last step of TCR assembly in the endoplasmic reticulum and is required for transport to the cell surface. As to expression, expressed in M/matrix protein 1-specific effector and memory CD8-positive T cells readily detectable in the peripheral blood, secondary lymphoid organs and lung (primary site of infection) of IAV infected individuals.

It localises to the cell membrane. The alpha chain of TRAV27*01J42*01C*01/TRBV19*01J2S7*01C*02 alpha-beta T cell receptor (TR) clonotype that is specific for HLA-A*02:01-restricted M/matrix protein 1 immunodominant epitope GILGFVFTL of influenza A virus (IAV). Classified as a public TR clonotype, it is preferentially selected in effector memory CD8-positive T cells among multiple HLA-A*02:01 carriers and confers long-lived immunity against IAV infection. Can cross-recognize sporadically emerging IAV variants by molecular mimicry, inducing immunity toward different influenza strains. Antigen recognition initiates TR-CD3 clustering on the cell surface and intracellular activation of LCK that phosphorylates the ITAM motifs of CD3G, CD3D, CD3E and CD247 enabling the recruitment of ZAP70. In turn, ZAP70 phosphorylates LAT, which recruits numerous signaling molecules to form the LAT signalosome. The LAT signalosome propagates signal branching to three major signaling pathways, the calcium, the mitogen-activated protein kinase (MAPK) kinase and the nuclear factor NF-kappa-B (NF-kB) pathways, leading to the mobilization of transcription factors that are critical for gene expression and essential for T cell differentiation into effector/memory T cells. This Homo sapiens (Human) protein is M1-specific T cell receptor alpha chain.